The sequence spans 218 residues: Adenylate kinase (218 aa).

ATP is bound at residue 10-15 (GAGKGT). Positions 30 to 59 (STGDMFRAAMANQTEMGRLAKSFIDKGELV) are NMP. AMP-binding positions include Thr31, Arg36, 57–59 (ELV), 86–89 (GYPR), and Gln93. An LID region spans residues 127–165 (GRFICRSCGSTYHKVFNPTKVEGTCDVCGGHEFFQREDD). Arg128 is an ATP binding site. Residues Cys131 and Cys134 each coordinate Zn(2+). 137–138 (TY) provides a ligand contact to ATP. Residues Cys151 and Cys154 each contribute to the Zn(2+) site. The AMP site is built by Arg162 and Arg173. Gln201 lines the ATP pocket.

Belongs to the adenylate kinase family. Monomer.

It is found in the cytoplasm. It catalyses the reaction AMP + ATP = 2 ADP. The protein operates within purine metabolism; AMP biosynthesis via salvage pathway; AMP from ADP: step 1/1. Its function is as follows. Catalyzes the reversible transfer of the terminal phosphate group between ATP and AMP. Plays an important role in cellular energy homeostasis and in adenine nucleotide metabolism. This is Adenylate kinase from Streptococcus thermophilus (strain CNRZ 1066).